The chain runs to 210 residues: Protein PF1979 (210 aa).

The AMMECR1 domain occupies 7 to 201 (EWGEFLVRLA…EEYPRGPVKR (195 aa)).

The sequence is that of Protein PF1979 from Pyrococcus furiosus (strain ATCC 43587 / DSM 3638 / JCM 8422 / Vc1).